The following is a 1241-amino-acid chain: Putative urea carboxylase (1241 aa).

A Biotin carboxylation domain is found at 3 to 459 (ALKTLLIANR…LTKFLNNFEY (457 aa)). ATP contacts are provided by Lys-117 and Glu-201. The ATP-grasp domain maps to 121-321 (RELATKAGVP…LVELMLRQAD (201 aa)). Residues 1159-1239 (EELLKDPEIT…EAGKPLMLVR (81 aa)) enclose the Biotinyl-binding domain. N6-biotinyllysine is present on Lys-1202.

Biotin serves as cofactor.

The enzyme catalyses urea + hydrogencarbonate + ATP = urea-1-carboxylate + ADP + phosphate + H(+). Functionally, involved in the utilization of lactams. Required for the conversion of exogenous 2-pyrrolidinone (gamma-butyrolactam) to endogenous gamma-amino-n-butyrate (GABA). The sequence is that of Putative urea carboxylase (lamA) from Emericella nidulans (strain FGSC A4 / ATCC 38163 / CBS 112.46 / NRRL 194 / M139) (Aspergillus nidulans).